The following is a 581-amino-acid chain: Colicin-E2 (581 aa).

Disordered regions lie at residues 1–74 (MSGG…SGGG), 242–269 (QTLSPGVTNNTDKDVRPAGFTQGGNTRD), 293–320 (PDQVKQRQDEENRRQQEWDATHPVEAAE), 421–488 (ADAA…IADK), and 513–566 (DLSK…MNNI). Positions 20 to 35 (INGGPTGLGVGGGASD) are enriched in gly residues. The span at 36–45 (GSGWSSENNP) shows a compositional bias: low complexity. A compositionally biased stretch (gly residues) spans 46-74 (WGGGSGSGIHWGGGSGHGNGGGNGNSGGG). Over residues 242-251 (QTLSPGVTNN) the composition is skewed to polar residues. Basic and acidic residues-rich tracts occupy residues 296 to 320 (VKQRQDEENRRQQEWDATHPVEAAE), 429 to 452 (QERRKQKENKEKDAKDKLDKESKR), and 464 to 475 (PVGDKWLDDAGK). Residues 518-527 (FKGSNKTNIQ) are compositionally biased toward polar residues. A compositionally biased stretch (basic and acidic residues) spans 535–554 (RKKDQVGGRERFELHHDKPI). 3 residues coordinate Zn(2+): His549, His574, and His578.

Belongs to the colicin/pyosin nuclease family.

Its function is as follows. This plasmid-coded bactericidal protein is an endonuclease active on both single- and double-stranded DNA but with undefined specificity. Functionally, colicins are polypeptide toxins produced by and active against E.coli and closely related bacteria. This Escherichia coli protein is Colicin-E2 (col).